The primary structure comprises 171 residues: UPF0312 protein SAB2563 (171 aa).

This sequence belongs to the UPF0312 family.

The protein is UPF0312 protein SAB2563 of Staphylococcus aureus (strain bovine RF122 / ET3-1).